We begin with the raw amino-acid sequence, 229 residues long: Dolichyldiphosphatase 1 (229 aa).

Helical transmembrane passes span 27-47, 94-114, 120-140, and 156-176; these read LFNA…ITLI, MPSS…LFYL, FGSK…AAGV, and FCGS…IEYI.

It belongs to the dolichyldiphosphatase family.

The protein localises to the endoplasmic reticulum membrane. The enzyme catalyses a di-trans,poly-cis-dolichyl diphosphate + H2O = a di-trans,poly-cis-dolichyl phosphate + phosphate + H(+). It functions in the pathway protein modification; protein glycosylation. Required for efficient N-glycosylation. Necessary for maintaining optimal levels of dolichol-linked oligosaccharides. Hydrolyzes dolichyl pyrophosphate at a very high rate and dolichyl monophosphate at a much lower rate. Does not act on phosphatidate. This chain is Dolichyldiphosphatase 1 (dolpp1), found in Dictyostelium discoideum (Social amoeba).